We begin with the raw amino-acid sequence, 325 residues long: Methionine import ATP-binding protein MetN 3 (325 aa).

Residues 2–239 enclose the ABC transporter domain; sequence IEVQQLCKVY…PQSALGRALL (238 aa). 36-43 serves as a coordination point for ATP; the sequence is GRSGAGKS.

This sequence belongs to the ABC transporter superfamily. Methionine importer (TC 3.A.1.24) family. In terms of assembly, the complex is composed of two ATP-binding proteins (MetN), two transmembrane proteins (MetI) and a solute-binding protein (MetQ).

It is found in the cell inner membrane. The catalysed reaction is L-methionine(out) + ATP + H2O = L-methionine(in) + ADP + phosphate + H(+). The enzyme catalyses D-methionine(out) + ATP + H2O = D-methionine(in) + ADP + phosphate + H(+). Functionally, part of the ABC transporter complex MetNIQ involved in methionine import. Responsible for energy coupling to the transport system. This chain is Methionine import ATP-binding protein MetN 3, found in Pseudomonas fluorescens (strain ATCC BAA-477 / NRRL B-23932 / Pf-5).